The following is a 387-amino-acid chain: Solute carrier family 25 protein Shawn (387 aa).

Solcar repeat units lie at residues 37–156 (IRPL…FKAR), 179–263 (IPFL…LKSS), and 269–366 (PTFS…GKSF). 6 consecutive transmembrane segments (helical) span residues 43–63 (VASA…LDVI), 128–148 (LWSG…IYFV), 179–199 (IPFL…VTCV), 235–255 (LWRG…IYWT), 275–295 (FAAG…FDVV), and 337–357 (AIFS…AIMI).

Belongs to the mitochondrial carrier (TC 2.A.29) family.

The protein resides in the mitochondrion inner membrane. Mitochondrial transporter required for glutathione import into mitochondria. In Drosophila melanogaster (Fruit fly), this protein is Solute carrier family 25 protein Shawn.